A 337-amino-acid polypeptide reads, in one-letter code: Tryptophan--tRNA ligase (337 aa).

ATP contacts are provided by residues 12-14 (QPS) and 21-22 (GN). A 'HIGH' region motif is present at residues 13-22 (PSADSLHLGN). Position 138 (Asp138) interacts with L-tryptophan. Residues 150–152 (GDD), Ile189, and 198–202 (KMSKS) each bind ATP. The 'KMSKS' region signature appears at 198-202 (KMSKS).

The protein belongs to the class-I aminoacyl-tRNA synthetase family. As to quaternary structure, homodimer.

The protein resides in the cytoplasm. It carries out the reaction tRNA(Trp) + L-tryptophan + ATP = L-tryptophyl-tRNA(Trp) + AMP + diphosphate + H(+). In terms of biological role, catalyzes the attachment of tryptophan to tRNA(Trp). This Leifsonia xyli subsp. xyli (strain CTCB07) protein is Tryptophan--tRNA ligase.